A 1145-amino-acid chain; its full sequence is DNA polymerase subunit gamma-1, mitochondrial (1145 aa).

The transit peptide at 1 to 9 (MQFHLIRKY) directs the protein to the mitochondrion.

It belongs to the DNA polymerase type-A family. In terms of assembly, component of the DNA polymerase gamma complex consisting of two subunits: the catalytic subunit DNApol-gamma/DNApolG1 and the accessory subunit PolG2/DNApol-gamma35. The cofactor is Mg(2+).

It is found in the mitochondrion. It carries out the reaction DNA(n) + a 2'-deoxyribonucleoside 5'-triphosphate = DNA(n+1) + diphosphate. Its activity is regulated as follows. Stimulated by KCl, and inhibited by the small molecules o 2',3'-dideoxythymidine 5'-triphosphate (d2TTP) and N-ethylmaleimide (NEM). In terms of biological role, as the catalytic component of the DNA polymerase gamma complex is involved in the replication of mitochondrial DNA (mtDNA). Has both 5'-3' DNA polymerase and a highly mispair-specific 3'-5' exonuclease activity. At the end of mtDNA replication DNA ends are ligated to produce a closed circular mtDNA molecule, its exonuclease activity is required for formation of these ligatable ends by preventing DNA synthesis from continuing past the 5'-end of downstream DNA into duplex DNA regions. Does not possess DNA primase activity, does not catalyze strand displacement synthesis and does not contain a 5'-3' exonuclease activity to catalyze nick translation. Important for promoting the elimination of paternal mitochondrial DNA during spermatogenesis, however its exact role in this function has not yet been identified and appears to be independent of its 3'-5'-exonuclease activity and only partially dependent on its DNA polymerase activity. This chain is DNA polymerase subunit gamma-1, mitochondrial, found in Drosophila melanogaster (Fruit fly).